Consider the following 218-residue polypeptide: Large ribosomal subunit protein bL25 (218 aa).

Positions 178-218 (VTPPTVTEDPDATEEDNTTAESVEATGERNDDNLDRPGRVE) are disordered. Acidic residues predominate over residues 185-195 (EDPDATEEDNT). Over residues 203-218 (TGERNDDNLDRPGRVE) the composition is skewed to basic and acidic residues.

It belongs to the bacterial ribosomal protein bL25 family. CTC subfamily. Part of the 50S ribosomal subunit; part of the 5S rRNA/L5/L18/L25 subcomplex. Contacts the 5S rRNA. Binds to the 5S rRNA independently of L5 and L18.

Functionally, this is one of the proteins that binds to the 5S RNA in the ribosome where it forms part of the central protuberance. This is Large ribosomal subunit protein bL25 from Shouchella clausii (strain KSM-K16) (Alkalihalobacillus clausii).